The primary structure comprises 650 residues: Macrolide export ATP-binding/permease protein MacB (650 aa).

In terms of domain architecture, ABC transporter spans Leu-6–Pro-244. Residue Gly-42 to Ser-49 participates in ATP binding. The interval Gln-227–Thr-246 is disordered. Residues Ala-233 to Thr-246 show a composition bias toward low complexity. 4 helical membrane passes run Phe-275–Gly-295, Leu-523–Met-543, Leu-580–Phe-600, and Ser-615–Ala-635.

It belongs to the ABC transporter superfamily. Macrolide exporter (TC 3.A.1.122) family. Homodimer. Part of the tripartite efflux system MacAB-TolC, which is composed of an inner membrane transporter, MacB, a periplasmic membrane fusion protein, MacA, and an outer membrane component, TolC. The complex forms a large protein conduit and can translocate molecules across both the inner and outer membranes. Interacts with MacA.

The protein resides in the cell inner membrane. Part of the tripartite efflux system MacAB-TolC. MacB is a non-canonical ABC transporter that contains transmembrane domains (TMD), which form a pore in the inner membrane, and an ATP-binding domain (NBD), which is responsible for energy generation. Confers resistance against macrolides. This Pectobacterium atrosepticum (strain SCRI 1043 / ATCC BAA-672) (Erwinia carotovora subsp. atroseptica) protein is Macrolide export ATP-binding/permease protein MacB.